Reading from the N-terminus, the 465-residue chain is Antithrombin-III (465 aa).

A signal peptide spans 1-32 (MISNGIGTVTTGKRSMCLFPLLLIGLWGCVTC). 2 cysteine pairs are disulfide-bonded: cysteine 41–cysteine 161 and cysteine 54–cysteine 128. Position 64 is a phosphothreonine (threonine 64). Position 69 is a phosphoserine (serine 69). Tryptophan 82 contacts heparin. Asparagine 129 is a glycosylation site (N-linked (GlcNAc...) asparagine). Arginine 162 is a binding site for heparin. N-linked (GlcNAc...) asparagine glycosylation is present at asparagine 168. Arginine 178 is a heparin binding site. N-linked (GlcNAc...) asparagine glycans are attached at residues asparagine 188 and asparagine 225. Cysteines 280 and 463 form a disulfide.

It belongs to the serpin family. As to quaternary structure, forms protease inhibiting heterodimer with TMPRSS7. Post-translationally, phosphorylated by FAM20C in the extracellular medium. As to expression, plasma.

It is found in the secreted. The protein localises to the extracellular space. Functionally, most important serine protease inhibitor in plasma that regulates the blood coagulation cascade. AT-III inhibits thrombin, matriptase-3/TMPRSS7, as well as factors IXa, Xa and XIa. Its inhibitory activity is greatly enhanced in the presence of heparin. The chain is Antithrombin-III (SERPINC1) from Ovis aries (Sheep).